The following is a 514-amino-acid chain: RNA-binding region-containing protein 3 (514 aa).

The interval 1–26 is disordered; the sequence is MAGPEPPMPLSRGGPGSASLSPPRGD. Phosphoserine is present on S21. Residues 27–102 enclose the RRM 1 domain; the sequence is RTLLVRHLPA…HTLVVEFAKE (76 aa). Disordered stretches follow at residues 106–133, 213–282, and 337–363; these read VHSP…EKKE, MPLH…VRKK, and ETQP…FGKI. A Phosphoserine modification is found at S108. The span at 115–133 shows a compositional bias: basic and acidic residues; that stretch reads TEKKKRLDDTVENDKEKKE. A compositionally biased stretch (pro residues) spans 217 to 230; sequence APLPPTSPQPPEEP. S349 is modified (phosphoserine). One can recognise an RRM 2 domain in the interval 418-501; sequence CRIYVKNLAR…KPMVVQFARS (84 aa).

Component of the U11/U12 snRNPs that are part of the U12-type spliceosome. Found in a complex with m(7)G-capped U12 snRNA. Interacts with PDCD7.

It localises to the nucleus. Functionally, participates in pre-mRNA U12-dependent splicing, performed by the minor spliceosome which removes U12-type introns. U12-type introns comprises less than 1% of all non-coding sequences. Binds to the 3'-stem-loop of m(7)G-capped U12 snRNA. The chain is RNA-binding region-containing protein 3 (Rnpc3) from Mus musculus (Mouse).